The sequence spans 299 residues: Bifunctional protein FolD (299 aa).

Residues 164–166 (GRS) and isoleucine 234 contribute to the NADP(+) site.

It belongs to the tetrahydrofolate dehydrogenase/cyclohydrolase family. As to quaternary structure, homodimer.

The enzyme catalyses (6R)-5,10-methylene-5,6,7,8-tetrahydrofolate + NADP(+) = (6R)-5,10-methenyltetrahydrofolate + NADPH. It carries out the reaction (6R)-5,10-methenyltetrahydrofolate + H2O = (6R)-10-formyltetrahydrofolate + H(+). It participates in one-carbon metabolism; tetrahydrofolate interconversion. Its function is as follows. Catalyzes the oxidation of 5,10-methylenetetrahydrofolate to 5,10-methenyltetrahydrofolate and then the hydrolysis of 5,10-methenyltetrahydrofolate to 10-formyltetrahydrofolate. The polypeptide is Bifunctional protein FolD (Christiangramia forsetii (strain DSM 17595 / CGMCC 1.15422 / KT0803) (Gramella forsetii)).